A 507-amino-acid polypeptide reads, in one-letter code: ATP synthase subunit alpha, mitochondrial (507 aa).

Gly-171–Thr-178 contacts ATP.

It belongs to the ATPase alpha/beta chains family. F-type ATPases have 2 components, CF(1) - the catalytic core - and CF(0) - the membrane proton channel. CF(1) has five subunits: alpha(3), beta(3), gamma(1), delta(1), epsilon(1). CF(0) has three main subunits: a, b and c.

It localises to the mitochondrion. Its subcellular location is the mitochondrion inner membrane. In terms of biological role, mitochondrial membrane ATP synthase (F(1)F(0) ATP synthase or Complex V) produces ATP from ADP in the presence of a proton gradient across the membrane which is generated by electron transport complexes of the respiratory chain. F-type ATPases consist of two structural domains, F(1) - containing the extramembraneous catalytic core, and F(0) - containing the membrane proton channel, linked together by a central stalk and a peripheral stalk. During catalysis, ATP synthesis in the catalytic domain of F(1) is coupled via a rotary mechanism of the central stalk subunits to proton translocation. Subunits alpha and beta form the catalytic core in F(1). Rotation of the central stalk against the surrounding alpha(3)beta(3) subunits leads to hydrolysis of ATP in three separate catalytic sites on the beta subunits. Subunit alpha does not bear the catalytic high-affinity ATP-binding sites. The protein is ATP synthase subunit alpha, mitochondrial (ATPA) of Brassica napus (Rape).